The primary structure comprises 264 residues: JmjC domain-containing protein 8 (264 aa).

A signal peptide spans 1–23 (MAPASRLLALWALAAVALPGSGA). Residues asparagine 130, asparagine 140, and asparagine 209 are each glycosylated (N-linked (GlcNAc...) asparagine). One can recognise a JmjC domain in the interval 131-264 (DTLYFFGDNN…TSVFISTFLG (134 aa)).

Oligomer. Dimer. Interacts with PKM; regulates angiogenesis and metabolism. In terms of processing, N-glycosylated.

It localises to the endoplasmic reticulum lumen. It is found in the cytoplasm. Functions as a positive regulator of TNF-induced NF-kappa-B signaling. Regulates angiogenesis and cellular metabolism through interaction with PKM. In Homo sapiens (Human), this protein is JmjC domain-containing protein 8.